A 181-amino-acid polypeptide reads, in one-letter code: Inner membrane-spanning protein YciB (181 aa).

A run of 5 helical transmembrane segments spans residues 24–44, 49–69, 81–101, 119–139, and 149–169; these read SATA…WLRH, NMLW…LILQ, LYWL…KNLI, LNIS…YVAY, and FKLF…ALLL.

The protein belongs to the YciB family.

The protein localises to the cell inner membrane. Functionally, plays a role in cell envelope biogenesis, maintenance of cell envelope integrity and membrane homeostasis. The polypeptide is Inner membrane-spanning protein YciB (Nitrosomonas eutropha (strain DSM 101675 / C91 / Nm57)).